Here is a 395-residue protein sequence, read N- to C-terminus: Putative 8-amino-7-oxononanoate synthase (395 aa).

Residue arginine 23 participates in substrate binding. Residue 110–111 coordinates pyridoxal 5'-phosphate; sequence GY. Substrate is bound at residue histidine 135. Residues serine 182, 207–210, and 239–242 contribute to the pyridoxal 5'-phosphate site; these read DEAH and TFSK. Position 242 is an N6-(pyridoxal phosphate)lysine (lysine 242). Threonine 356 serves as a coordination point for substrate.

The protein belongs to the class-II pyridoxal-phosphate-dependent aminotransferase family. BioF subfamily. In terms of assembly, homodimer. Pyridoxal 5'-phosphate is required as a cofactor.

The catalysed reaction is 6-carboxyhexanoyl-[ACP] + L-alanine + H(+) = (8S)-8-amino-7-oxononanoate + holo-[ACP] + CO2. It participates in cofactor biosynthesis; biotin biosynthesis. In terms of biological role, catalyzes the decarboxylative condensation of pimeloyl-[acyl-carrier protein] and L-alanine to produce 8-amino-7-oxononanoate (AON), [acyl-carrier protein], and carbon dioxide. In Bacillus cereus (strain ZK / E33L), this protein is Putative 8-amino-7-oxononanoate synthase (bioF).